Consider the following 195-residue polypeptide: FK506-binding protein 2 (195 aa).

An N-terminal signal peptide occupies residues 1–19 (MKAALFLSALASTAVGVVA). Residues 39-127 (GDGVHMHYRG…VFETELVGID (89 aa)) form the PPIase FKBP-type domain. The Prevents secretion from ER signature appears at 192–195 (HEEL).

It belongs to the FKBP-type PPIase family. FKBP2 subfamily.

The protein localises to the endoplasmic reticulum. It carries out the reaction [protein]-peptidylproline (omega=180) = [protein]-peptidylproline (omega=0). With respect to regulation, inhibited by both FK506 and rapamycin. Its function is as follows. PPIases accelerate the folding of proteins. It catalyzes the cis-trans isomerization of proline imidic peptide bonds in oligopeptides. This chain is FK506-binding protein 2 (FPR2), found in Gibberella zeae (strain ATCC MYA-4620 / CBS 123657 / FGSC 9075 / NRRL 31084 / PH-1) (Wheat head blight fungus).